The primary structure comprises 348 residues: DnaJ homolog subfamily B member 5 (348 aa).

In terms of domain architecture, J spans 4–68; it reads DYYKILGIPS…KKRGLYDQYG (65 aa).

The sequence is that of DnaJ homolog subfamily B member 5 (DNAJB5) from Bos taurus (Bovine).